The following is a 510-amino-acid chain: Serine/threonine-protein kinase RIO3 (510 aa).

Disordered stretches follow at residues 100-126 (GSSS…ENED) and 143-191 (DEEN…DMVG). 2 stretches are compositionally biased toward basic and acidic residues: residues 108–118 (TPDRYHPKTMQ) and 162–179 (TKHD…KTFN). A Protein kinase domain is found at 235–510 (LLLLKWINQG…RGISPAREYN (276 aa)). Residues 241–249 (INQGVFDSV) and K275 each bind ATP. D388 functions as the Proton acceptor in the catalytic mechanism. Residues 474 to 499 (RSVDLRHDKSRPADMELKKYNEEKKA) are compositionally biased toward basic and acidic residues. Residues 474-510 (RSVDLRHDKSRPADMELKKYNEEKKANRGISPAREYN) are disordered.

This sequence belongs to the protein kinase superfamily. RIO-type Ser/Thr kinase family. The cofactor is Mg(2+). As to expression, expressed in tail neurons (PVQ and PHAL/PQR).

It carries out the reaction L-seryl-[protein] + ATP = O-phospho-L-seryl-[protein] + ADP + H(+). The catalysed reaction is L-threonyl-[protein] + ATP = O-phospho-L-threonyl-[protein] + ADP + H(+). The sequence is that of Serine/threonine-protein kinase RIO3 (riok-3) from Caenorhabditis elegans.